The sequence spans 122 residues: Large ribosomal subunit protein uL18 (122 aa).

This sequence belongs to the universal ribosomal protein uL18 family. In terms of assembly, part of the 50S ribosomal subunit; part of the 5S rRNA/L5/L18/L25 subcomplex. Contacts the 5S and 23S rRNAs.

This is one of the proteins that bind and probably mediate the attachment of the 5S RNA into the large ribosomal subunit, where it forms part of the central protuberance. In Leptospira borgpetersenii serovar Hardjo-bovis (strain JB197), this protein is Large ribosomal subunit protein uL18.